Consider the following 590-residue polypeptide: Cytidine monophosphate-N-acetylneuraminic acid hydroxylase (590 aa).

The Rieske domain maps to 14–112 (LSPVEVASLK…VEMDENNRLL (99 aa)). [2Fe-2S] cluster contacts are provided by cysteine 54, histidine 56, cysteine 75, and histidine 78.

It belongs to the CMP-Neu5Ac hydroxylase family. Requires [2Fe-2S] cluster as cofactor.

The protein localises to the cytoplasm. It catalyses the reaction CMP-N-acetyl-beta-neuraminate + 2 Fe(II)-[cytochrome b5] + O2 + 2 H(+) = CMP-N-glycoloyl-beta-neuraminate + 2 Fe(III)-[cytochrome b5] + H2O. It participates in amino-sugar metabolism; N-acetylneuraminate metabolism. In terms of biological role, sialic acids are components of carbohydrate chains of glycoconjugates and are involved in cell-cell recognition and cell-pathogen interactions. Catalyzes the conversion of CMP-N-acetylneuraminic acid (CMP-Neu5Ac) into its hydroxylated derivative CMP-N-glycolylneuraminic acid (CMP-Neu5Gc), a sialic acid abundantly expressed at the surface of many cells. This is Cytidine monophosphate-N-acetylneuraminic acid hydroxylase from Pan troglodytes (Chimpanzee).